The primary structure comprises 343 residues: Vacuolar membrane protein Kpol_1003p17 (343 aa).

The tract at residues 45-65 (TTDTSGTSTSSRDVSSGQSTL) is disordered. Residues 101–121 (FIAVGSIIGGIFGGVLIWWMI) form a helical membrane-spanning segment. The disordered stretch occupies residues 235 to 343 (EVLQQQRQRR…YLDDMLENDN (109 aa)). The segment covering 254–264 (ELPSTPPSNFK) has biased composition (polar residues). Positions 269–280 (KPERSASPERKS) are enriched in basic and acidic residues. The span at 281 to 290 (RSPIRQHRKN) shows a compositional bias: basic residues.

Belongs to the PRM5 family.

It localises to the vacuole membrane. This chain is Vacuolar membrane protein Kpol_1003p17, found in Vanderwaltozyma polyspora (strain ATCC 22028 / DSM 70294 / BCRC 21397 / CBS 2163 / NBRC 10782 / NRRL Y-8283 / UCD 57-17) (Kluyveromyces polysporus).